The following is a 668-amino-acid chain: Fructose-1,6-bisphosphatase class 3 (668 aa).

This sequence belongs to the FBPase class 3 family. The cofactor is Mn(2+).

It catalyses the reaction beta-D-fructose 1,6-bisphosphate + H2O = beta-D-fructose 6-phosphate + phosphate. Its pathway is carbohydrate biosynthesis; gluconeogenesis. This Clostridium botulinum (strain ATCC 19397 / Type A) protein is Fructose-1,6-bisphosphatase class 3.